Consider the following 240-residue polypeptide: Large ribosomal subunit protein uL1 (240 aa).

Belongs to the universal ribosomal protein uL1 family. In terms of assembly, part of the 50S ribosomal subunit.

Functionally, binds directly to 23S rRNA. The L1 stalk is quite mobile in the ribosome, and is involved in E site tRNA release. Protein L1 is also a translational repressor protein, it controls the translation of the L11 operon by binding to its mRNA. The chain is Large ribosomal subunit protein uL1 from Streptomyces griseus subsp. griseus (strain JCM 4626 / CBS 651.72 / NBRC 13350 / KCC S-0626 / ISP 5235).